Reading from the N-terminus, the 86-residue chain is Large ribosomal subunit protein bL28 (86 aa).

The protein belongs to the bacterial ribosomal protein bL28 family.

The polypeptide is Large ribosomal subunit protein bL28 (Bacteroides fragilis (strain ATCC 25285 / DSM 2151 / CCUG 4856 / JCM 11019 / LMG 10263 / NCTC 9343 / Onslow / VPI 2553 / EN-2)).